Consider the following 291-residue polypeptide: 33 kDa chaperonin (291 aa).

2 cysteine pairs are disulfide-bonded: Cys-237-Cys-239 and Cys-270-Cys-273.

Belongs to the HSP33 family. Post-translationally, under oxidizing conditions two disulfide bonds are formed involving the reactive cysteines. Under reducing conditions zinc is bound to the reactive cysteines and the protein is inactive.

It localises to the cytoplasm. Functionally, redox regulated molecular chaperone. Protects both thermally unfolding and oxidatively damaged proteins from irreversible aggregation. Plays an important role in the bacterial defense system toward oxidative stress. The polypeptide is 33 kDa chaperonin (Bacillus anthracis (strain A0248)).